Here is an 866-residue protein sequence, read N- to C-terminus: Transcription factor E2F8 (866 aa).

Residues S71 and S102 each carry the phosphoserine modification. DNA-binding regions lie at residues R113–G182 and R261–G347. 3 disordered regions span residues R409–N429, T532–L632, and T794–C837. Phosphoserine occurs at positions 413 and 417. Residues V543 to M552 are compositionally biased toward polar residues. Composition is skewed to basic and acidic residues over residues Q588–S603 and S612–A624. Polar residues predominate over residues T794 to Q805. Over residues T825 to G834 the composition is skewed to low complexity.

This sequence belongs to the E2F/DP family. As to quaternary structure, homodimer and heterodimer: mainly forms homodimers and, to a lesser extent, heterodimers with E2F8. Dimerization is important for DNA-binding. Interacts with HIF1A.

The protein localises to the nucleus. Its function is as follows. Atypical E2F transcription factor that participates in various processes such as angiogenesis and polyploidization of specialized cells. Mainly acts as a transcription repressor that binds DNA independently of DP proteins and specifically recognizes the E2 recognition site 5'-TTTC[CG]CGC-3'. Directly represses transcription of classical E2F transcription factors such as E2F1: component of a feedback loop in S phase by repressing the expression of E2F1, thereby preventing p53/TP53-dependent apoptosis. Plays a key role in polyploidization of cells in placenta and liver by regulating the endocycle, probably by repressing genes promoting cytokinesis and antagonizing action of classical E2F proteins (E2F1, E2F2 and/or E2F3). Required for placental development by promoting polyploidization of trophoblast giant cells. Acts as a promoter of sprouting angiogenesis, possibly by acting as a transcription activator: associates with HIF1A, recognizes and binds the VEGFA promoter, which is different from canonical E2 recognition site, and activates expression of the VEGFA gene. In Bos taurus (Bovine), this protein is Transcription factor E2F8 (E2F8).